A 90-amino-acid polypeptide reads, in one-letter code: Lectin-1 (90 aa).

Glutamine 1 is subject to Pyrrolidone carboxylic acid. An intrachain disulfide couples cysteine 46 to cysteine 71.

In terms of processing, the N-terminus is blocked. Post-translationally, contains seven disulfide bonds. Proteolytically cleaved. Major mature form may consist of cleaved, disulfide-bonded N-terminal and C-terminal chains.

Functionally, lectin with specificity for complex N-linked glycans and O-linked glycans. Has hemagglutinating activity towards rabbit erythrocytes. The sequence is that of Lectin-1 from Hypnea musciformis (Red alga).